Here is a 253-residue protein sequence, read N- to C-terminus: Adenosylcobinamide-GDP ribazoletransferase (253 aa).

The next 7 helical transmembrane spans lie at 33–53 (ISPL…YVLL), 56–76 (ILEA…RGFN), 106–126 (IGSG…VALL), 132–152 (FYTI…GLYI), 178–198 (VLLF…FLVF), 209–229 (LGGS…PLFL), and 233–253 (EITN…LYLH).

It belongs to the CobS family. Mg(2+) serves as cofactor.

It localises to the cell membrane. The enzyme catalyses alpha-ribazole + adenosylcob(III)inamide-GDP = adenosylcob(III)alamin + GMP + H(+). It catalyses the reaction alpha-ribazole 5'-phosphate + adenosylcob(III)inamide-GDP = adenosylcob(III)alamin 5'-phosphate + GMP + H(+). It participates in cofactor biosynthesis; adenosylcobalamin biosynthesis; adenosylcobalamin from cob(II)yrinate a,c-diamide: step 7/7. In terms of biological role, joins adenosylcobinamide-GDP and alpha-ribazole to generate adenosylcobalamin (Ado-cobalamin). Also synthesizes adenosylcobalamin 5'-phosphate from adenosylcobinamide-GDP and alpha-ribazole 5'-phosphate. In Saccharolobus islandicus (strain M.16.27) (Sulfolobus islandicus), this protein is Adenosylcobinamide-GDP ribazoletransferase.